The sequence spans 336 residues: Dihydroorotate dehydrogenase (quinone) (336 aa).

Residues 62 to 66 (AGLDK) and Thr-86 contribute to the FMN site. Residue Lys-66 coordinates substrate. Substrate is bound at residue 111–115 (NRMGF). Residues Asn-139 and Asn-172 each coordinate FMN. Substrate is bound at residue Asn-172. The active-site Nucleophile is Ser-175. Position 177 (Asn-177) interacts with substrate. Positions 217 and 245 each coordinate FMN. Substrate is bound at residue 246 to 247 (NT). Residues Gly-268, Gly-297, and 318-319 (YS) contribute to the FMN site.

This sequence belongs to the dihydroorotate dehydrogenase family. Type 2 subfamily. As to quaternary structure, monomer. Requires FMN as cofactor.

The protein localises to the cell membrane. It carries out the reaction (S)-dihydroorotate + a quinone = orotate + a quinol. It participates in pyrimidine metabolism; UMP biosynthesis via de novo pathway; orotate from (S)-dihydroorotate (quinone route): step 1/1. Its function is as follows. Catalyzes the conversion of dihydroorotate to orotate with quinone as electron acceptor. This chain is Dihydroorotate dehydrogenase (quinone), found in Aeromonas hydrophila subsp. hydrophila (strain ATCC 7966 / DSM 30187 / BCRC 13018 / CCUG 14551 / JCM 1027 / KCTC 2358 / NCIMB 9240 / NCTC 8049).